The chain runs to 437 residues: tRNA-queuosine alpha-mannosyltransferase (437 aa).

It belongs to the glycosyltransferase group 1 family. Glycosyltransferase 4 subfamily.

The protein localises to the cytoplasm. Its subcellular location is the nucleus. It catalyses the reaction queuosine(34) in tRNA(Asp) + GDP-alpha-D-mannose = O-4''-alpha-D-mannosylqueuosine(34) in tRNA(Asp) + GDP + H(+). In terms of biological role, glycosyltransferase that specifically catalyzes mannosylation of cytoplasmic tRNA(Asp) modified with queuosine at position 34 (queuosine(34)). Mannosylates the cyclopentene moiety of queuosine(34) in tRNA(Asp) to form mannosyl-queuosine(34). Mannosylation of queuosine(34) in tRNA(Asp) is required to slow-down elongation at cognate codons, GAC and GAU, thereby regulating protein translation. The polypeptide is tRNA-queuosine alpha-mannosyltransferase (gtdc1) (Xenopus tropicalis (Western clawed frog)).